The following is a 448-amino-acid chain: Probable glycine dehydrogenase (decarboxylating) subunit 1 (448 aa).

It belongs to the GcvP family. N-terminal subunit subfamily. In terms of assembly, the glycine cleavage system is composed of four proteins: P, T, L and H. In this organism, the P 'protein' is a heterodimer of two subunits.

The catalysed reaction is N(6)-[(R)-lipoyl]-L-lysyl-[glycine-cleavage complex H protein] + glycine + H(+) = N(6)-[(R)-S(8)-aminomethyldihydrolipoyl]-L-lysyl-[glycine-cleavage complex H protein] + CO2. Its function is as follows. The glycine cleavage system catalyzes the degradation of glycine. The P protein binds the alpha-amino group of glycine through its pyridoxal phosphate cofactor; CO(2) is released and the remaining methylamine moiety is then transferred to the lipoamide cofactor of the H protein. In Geobacillus thermodenitrificans (strain NG80-2), this protein is Probable glycine dehydrogenase (decarboxylating) subunit 1.